Here is a 258-residue protein sequence, read N- to C-terminus: Heat-labile enterotoxin A chain (258 aa).

Positions 1 to 18 are cleaved as a signal peptide; it reads MKNITFIFFILLASPLYA. Residue 25 to 39 participates in NAD(+) binding; the sequence is RADSRPPDEIKRSGG. Glutamate 130 is a catalytic residue. A disulfide bridge connects residues cysteine 205 and cysteine 217.

It belongs to the enterotoxin A family. Heterohexamer of one A chain and of five B chains.

Functionally, the biological activity of the toxin is produced by the A chain, which activates intracellular adenyl cyclase. This chain is Heat-labile enterotoxin A chain (eltA), found in Escherichia coli.